The following is a 1226-amino-acid chain: Methionine synthase (1226 aa).

The 321-residue stretch at 7 to 327 (KVQIEKQLSE…EHIRQMALVV (321 aa)) folds into the Hcy-binding domain. The Zn(2+) site is built by Cys249, Cys312, and Cys313. One can recognise a Pterin-binding domain in the interval 358 to 619 (FINVGERTNV…VPEDLREAVE (262 aa)). The region spanning 652 to 746 (SALEWRDWPV…FINASKEVGA (95 aa)) is the B12-binding N-terminal domain. Methylcob(III)alamin is bound by residues Glu696, 758–762 (GDVHD), His761, Ser806, Thr810, and Ala862. The 136-residue stretch at 748 to 883 (NGKILLATVK…SDELKPSFVE (136 aa)) folds into the B12-binding domain. The region spanning 899 to 1226 (KQPRTKPVTL…AEKWLGPNLN (328 aa)) is the AdoMet activation domain. Residues Asp949, Arg1137, and 1192 to 1193 (YF) each bind S-adenosyl-L-methionine.

Belongs to the vitamin-B12 dependent methionine synthase family. It depends on methylcob(III)alamin as a cofactor. The cofactor is Zn(2+).

The catalysed reaction is (6S)-5-methyl-5,6,7,8-tetrahydrofolate + L-homocysteine = (6S)-5,6,7,8-tetrahydrofolate + L-methionine. Its pathway is amino-acid biosynthesis; L-methionine biosynthesis via de novo pathway; L-methionine from L-homocysteine (MetH route): step 1/1. Its function is as follows. Catalyzes the transfer of a methyl group from methyl-cobalamin to homocysteine, yielding enzyme-bound cob(I)alamin and methionine. Subsequently, remethylates the cofactor using methyltetrahydrofolate. The chain is Methionine synthase (metH) from Aliivibrio fischeri (strain ATCC 700601 / ES114) (Vibrio fischeri).